The sequence spans 900 residues: Alanine--tRNA ligase (900 aa).

Zn(2+) contacts are provided by His-604, His-608, Cys-708, and His-712.

It belongs to the class-II aminoacyl-tRNA synthetase family. Zn(2+) is required as a cofactor.

It is found in the cytoplasm. It catalyses the reaction tRNA(Ala) + L-alanine + ATP = L-alanyl-tRNA(Ala) + AMP + diphosphate. In terms of biological role, catalyzes the attachment of alanine to tRNA(Ala) in a two-step reaction: alanine is first activated by ATP to form Ala-AMP and then transferred to the acceptor end of tRNA(Ala). Also edits incorrectly charged Ser-tRNA(Ala) and Gly-tRNA(Ala) via its editing domain. The protein is Alanine--tRNA ligase of Saccharolobus islandicus (strain L.S.2.15 / Lassen #1) (Sulfolobus islandicus).